The following is a 476-amino-acid chain: NADH-quinone oxidoreductase subunit N (476 aa).

The next 14 membrane-spanning stretches (helical) occupy residues 8-28 (ITTE…GLLV), 35-55 (GLGS…IINW), 71-91 (YATF…LGSF), 102-122 (FEYY…ASAG), 124-144 (FITL…LVAF), 159-179 (ILLA…VYGA), 201-221 (LIVG…AVPF), 239-259 (FLAV…FAGG), 267-287 (WTLL…LVAI), 295-315 (MLAY…VSAT), 322-342 (VMFY…VVAI), 366-386 (ASVM…AGFV), 405-425 (LGLI…LVMF), and 437-457 (VGGA…ILGI).

Belongs to the complex I subunit 2 family. NDH-1 is composed of 14 different subunits. Subunits NuoA, H, J, K, L, M, N constitute the membrane sector of the complex.

It localises to the cell membrane. The catalysed reaction is a quinone + NADH + 5 H(+)(in) = a quinol + NAD(+) + 4 H(+)(out). Functionally, NDH-1 shuttles electrons from NADH, via FMN and iron-sulfur (Fe-S) centers, to quinones in the respiratory chain. The immediate electron acceptor for the enzyme in this species is believed to be a menaquinone. Couples the redox reaction to proton translocation (for every two electrons transferred, four hydrogen ions are translocated across the cytoplasmic membrane), and thus conserves the redox energy in a proton gradient. The sequence is that of NADH-quinone oxidoreductase subunit N from Desulforamulus reducens (strain ATCC BAA-1160 / DSM 100696 / MI-1) (Desulfotomaculum reducens).